The sequence spans 261 residues: Carnitinyl-CoA dehydratase (261 aa).

Glu111 acts as the Nucleophile in catalysis. The Proton acceptor role is filled by Glu131.

The protein belongs to the enoyl-CoA hydratase/isomerase family.

It catalyses the reaction (R)-carnitinyl-CoA = crotonobetainyl-CoA + H2O. It participates in amine and polyamine metabolism; carnitine metabolism. In terms of biological role, catalyzes the reversible dehydration of L-carnitinyl-CoA to crotonobetainyl-CoA. In Salmonella enteritidis PT4 (strain P125109), this protein is Carnitinyl-CoA dehydratase.